Reading from the N-terminus, the 516-residue chain is Cytochrome P450 monooxygenase otaC (516 aa).

Residues 13–30 (FLWTAFAVGVVYCCTRMV) form a helical membrane-spanning segment. C454 lines the heme pocket.

The protein belongs to the cytochrome P450 family. It depends on heme as a cofactor.

It is found in the membrane. The enzyme catalyses 7-methylmellein + 3 reduced [NADPH--hemoprotein reductase] + 3 O2 = 7-carboxymellein + 3 oxidized [NADPH--hemoprotein reductase] + 4 H2O + 4 H(+). Its pathway is mycotoxin biosynthesis. In terms of biological role, cytochrome P450 monooxygenase; part of the gene cluster that mediates the biosynthesis of ochratoxin A (OTA), a mycotoxin composed of a chlorinated type I polyketide dihydroisocoumarin moiety linked to L-phenylalanine, and demonstrated to have nephrotoxic, immunotoxic, genotoxic, neurotoxic, and teratogenic properties. OtaC catalyzes the oxidation of 7-methylmellein (7-MM) into 7-carboxymellein. The pathway begins with the highly reducing polyketide synthase otaA that catalyzes the formation of the isocoumarin group during the initial stages of biosynthesis, starting from one acetate and 4 malonate units, to originate the characteristic pentaketide skeleton 7-methylmellein (7-MM) of the OTA molecule. The newly identified cyclase otaY might be involved in the polyketide cyclization reaction during the initial steps of the OTA biosynthesis. 7-MM is then oxidized into 7-carboxymellein (also called ochratoxin beta) by the cytochrome P450 monooxygenase otaC. The NRPS encoded by the otaB gene is involved in the linking of phenylalanine to the dihydroisocoumarin ring. The reaction catalyzed by NRPS results in the production of ochratoxin B (OTB), which is the non-chlorinated analog of OTA and which subsequently serves as the substrate of the halogenase otaD for chlorination activity to form the final molecular structure of OTA, containing a chlorine atom in the C-5 position of the molecule. The protein is Cytochrome P450 monooxygenase otaC of Aspergillus carbonarius (strain ITEM 5010).